The sequence spans 360 residues: Protein Wnt-2 (360 aa).

The signal sequence occupies residues 1-25; that stretch reads MNAPLGGIWLWLPLLLTWLTPEVNS. Cystine bridges form between C76-C87, C127-C135, C137-C157, C206-C220, C208-C215, C278-C309, C294-C304, C308-C348, C324-C339, C326-C336, and C331-C332. The O-palmitoleoyl serine; by PORCN moiety is linked to residue S212. The N-linked (GlcNAc...) asparagine glycan is linked to N295.

The protein belongs to the Wnt family. Post-translationally, palmitoleoylation is required for efficient binding to frizzled receptors. Depalmitoleoylation leads to Wnt signaling pathway inhibition.

It is found in the secreted. The protein resides in the extracellular space. It localises to the extracellular matrix. Ligand for members of the frizzled family of seven transmembrane receptors. Functions in the canonical Wnt signaling pathway that results in activation of transcription factors of the TCF/LEF family. Functions as a upstream regulator of FGF10 expression. Plays an important role in embryonic lung development. May contribute to embryonic brain development by regulating the proliferation of dopaminergic precursors and neurons. This chain is Protein Wnt-2 (WNT2), found in Gorilla gorilla gorilla (Western lowland gorilla).